The primary structure comprises 173 residues: MSKHTNIPMFRIGIGYDVHRFDNINNDDSNTSITICGIKINYHKKIIAHSDGDVGLHALADAILGAVGCGSIGQHFPNTDKKWKNAESSHFVIEAQKKAQERGYIISNADIIIICEQPKIMPYALEMQHYIAQFTSIDPSFINIKATTTEKLGAIGRNEGIAAQAIVLCSQQY.

A divalent metal cation is bound by residues aspartate 17 and histidine 19. Residues 17 to 19 and 49 to 50 contribute to the 4-CDP-2-C-methyl-D-erythritol 2-phosphate site; these read DVH and HS. Residue histidine 57 participates in a divalent metal cation binding. 4-CDP-2-C-methyl-D-erythritol 2-phosphate-binding positions include 76-80, 147-150, and arginine 157; these read FPNTD and TTTE.

It belongs to the IspF family. Homotrimer. A divalent metal cation serves as cofactor.

The catalysed reaction is 4-CDP-2-C-methyl-D-erythritol 2-phosphate = 2-C-methyl-D-erythritol 2,4-cyclic diphosphate + CMP. It participates in isoprenoid biosynthesis; isopentenyl diphosphate biosynthesis via DXP pathway; isopentenyl diphosphate from 1-deoxy-D-xylulose 5-phosphate: step 4/6. In terms of biological role, involved in the biosynthesis of isopentenyl diphosphate (IPP) and dimethylallyl diphosphate (DMAPP), two major building blocks of isoprenoid compounds. Catalyzes the conversion of 4-diphosphocytidyl-2-C-methyl-D-erythritol 2-phosphate (CDP-ME2P) to 2-C-methyl-D-erythritol 2,4-cyclodiphosphate (ME-CPP) with a corresponding release of cytidine 5-monophosphate (CMP). The sequence is that of 2-C-methyl-D-erythritol 2,4-cyclodiphosphate synthase from Ehrlichia ruminantium (strain Welgevonden).